Reading from the N-terminus, the 616-residue chain is Protein NRT1/ PTR FAMILY 2.11 (616 aa).

A disordered region spans residues 1–22 (MERKPLELESTDNHQNPSSAVY). A run of 12 helical transmembrane segments spans residues 59–79 (FEKL…TAVF), 87–107 (ATII…AAFL), 118–138 (LSVA…TAAV), 159–179 (GGQI…AGGI), 205–225 (FFNW…TLVV), 233–253 (WTIG…IFFA), 349–369 (VKCI…YLTI), 392–412 (FVIP…VFIV), 435–455 (LQRI…AGFV), 483–503 (AMWL…AAIG), 519–539 (FAGS…SFLI), and 566–586 (LFYF…LVMS).

The protein belongs to the major facilitator superfamily. Proton-dependent oligopeptide transporter (POT/PTR) (TC 2.A.17) family. In terms of tissue distribution, expressed in roots. Detected in shoots, stems and flowers. Expressed in veins and in the root vasculature with highest expression in lateral branching points.

The protein localises to the cell membrane. In terms of biological role, high-affinity, proton-dependent glucosinolate-specific transporter. Involved in apoplasmic phloem-loading of glucosinolates and in bidirectional long-distance transport of aliphatic but not indole glucosinolates. May be involved in removal of glucosinolates from the xylem in roots. The sequence is that of Protein NRT1/ PTR FAMILY 2.11 (NPF2.11) from Arabidopsis thaliana (Mouse-ear cress).